We begin with the raw amino-acid sequence, 346 residues long: uncharacterized protein (346 aa).

This is an uncharacterized protein from Mycoplasma genitalium (strain ATCC 33530 / DSM 19775 / NCTC 10195 / G37) (Mycoplasmoides genitalium).